Reading from the N-terminus, the 289-residue chain is 3-methyl-2-oxobutanoate hydroxymethyltransferase (289 aa).

Mg(2+)-binding residues include D50 and D89. Residues 50-51, D89, and K119 contribute to the 3-methyl-2-oxobutanoate site; that span reads DS. A Mg(2+)-binding site is contributed by E121. E188 serves as the catalytic Proton acceptor. The disordered stretch occupies residues 266-289; it reads AQHSFGMPEDEQRRWEENVSGADD.

This sequence belongs to the PanB family. In terms of assembly, homodecamer; pentamer of dimers. It depends on Mg(2+) as a cofactor.

It localises to the cytoplasm. The catalysed reaction is 3-methyl-2-oxobutanoate + (6R)-5,10-methylene-5,6,7,8-tetrahydrofolate + H2O = 2-dehydropantoate + (6S)-5,6,7,8-tetrahydrofolate. It participates in cofactor biosynthesis; (R)-pantothenate biosynthesis; (R)-pantoate from 3-methyl-2-oxobutanoate: step 1/2. Catalyzes the reversible reaction in which hydroxymethyl group from 5,10-methylenetetrahydrofolate is transferred onto alpha-ketoisovalerate to form ketopantoate. This Oleidesulfovibrio alaskensis (strain ATCC BAA-1058 / DSM 17464 / G20) (Desulfovibrio alaskensis) protein is 3-methyl-2-oxobutanoate hydroxymethyltransferase.